A 1268-amino-acid chain; its full sequence is Vigilin (1268 aa).

Ser2 carries the post-translational modification N-acetylserine. Thr8 is modified (phosphothreonine). Phosphoserine occurs at positions 11, 31, and 35. 7 consecutive KH domains span residues 150–212, 222–284, 295–357, 364–424, 435–497, 507–570, and 581–643; these read QASA…RHEV, RAVK…VARI, TTTI…LTEV, FTVS…QEQI, MDYV…KREL, ERTK…TKYM, and SYSI…RSRI. Thr295 and Thr296 each carry phosphothreonine. Ser317 is subject to Phosphoserine. A Phosphotyrosine modification is found at Tyr437. Residue Ser645 is modified to Phosphoserine. 7 KH domains span residues 653 to 716, 727 to 790, 800 to 863, 873 to 967, 972 to 1034, 1052 to 1117, and 1127 to 1190; these read IAEV…KKQL, SFTV…QKEL, VVED…KKRI, QVTL…KEAL, PVTI…KAGL, SFKL…RDAI, and MVSE…IDHI. Positions 910 to 946 are disordered; it reads PDREENPVHSVEPSIQENGDEAGEGREAKETDPGSPR. Positions 932–946 are enriched in basic and acidic residues; the sequence is GEGREAKETDPGSPR. At Lys991 the chain carries N6-acetyllysine. The segment at 1214–1268 is disordered; it reads PAHEESKAPSKGFVVRDAPWTSNSSEKAPDMSSSEEIPTFGAQVAPKTLPWGPKR. Residues 1233 to 1249 show a composition bias toward polar residues; sequence WTSNSSEKAPDMSSSEE. At Ser1247 the chain carries Phosphoserine.

The protein localises to the cytoplasm. It localises to the nucleus. Appears to play a role in cell sterol metabolism. It may function to protect cells from over-accumulation of cholesterol. The polypeptide is Vigilin (Hdlbp) (Rattus norvegicus (Rat)).